We begin with the raw amino-acid sequence, 577 residues long: Beta-glucosidase 30 (577 aa).

The N-terminal stretch at methionine 1–serine 23 is a signal peptide. A beta-D-glucoside is bound by residues glutamine 45, histidine 148, and asparagine 193–glutamate 194. Glutamate 194 functions as the Proton donor in the catalytic mechanism. The cysteines at positions 213 and 221 are disulfide-linked. Asparagine 328 is a glycosylation site (N-linked (GlcNAc...) asparagine). Tyrosine 338 is a binding site for a beta-D-glucoside. N-linked (GlcNAc...) asparagine glycosylation occurs at asparagine 368. Residues glutamate 410, tryptophan 460, glutamate 467–tryptophan 468, and phenylalanine 476 contribute to the a beta-D-glucoside site. Glutamate 410 acts as the Nucleophile in catalysis. N-linked (GlcNAc...) asparagine glycans are attached at residues asparagine 524 and asparagine 544.

This sequence belongs to the glycosyl hydrolase 1 family.

The enzyme catalyses Hydrolysis of terminal, non-reducing beta-D-glucosyl residues with release of beta-D-glucose.. The chain is Beta-glucosidase 30 from Arabidopsis thaliana (Mouse-ear cress).